Reading from the N-terminus, the 288-residue chain is Ribosomal RNA small subunit methyltransferase A (288 aa).

Residues Asn18, Leu20, Gly45, Glu66, Asp91, and Asn118 each coordinate S-adenosyl-L-methionine.

The protein belongs to the class I-like SAM-binding methyltransferase superfamily. rRNA adenine N(6)-methyltransferase family. RsmA subfamily.

It localises to the cytoplasm. It catalyses the reaction adenosine(1518)/adenosine(1519) in 16S rRNA + 4 S-adenosyl-L-methionine = N(6)-dimethyladenosine(1518)/N(6)-dimethyladenosine(1519) in 16S rRNA + 4 S-adenosyl-L-homocysteine + 4 H(+). In terms of biological role, specifically dimethylates two adjacent adenosines (A1518 and A1519) in the loop of a conserved hairpin near the 3'-end of 16S rRNA in the 30S particle. May play a critical role in biogenesis of 30S subunits. The protein is Ribosomal RNA small subunit methyltransferase A of Mannheimia succiniciproducens (strain KCTC 0769BP / MBEL55E).